The following is a 302-amino-acid chain: Protoheme IX farnesyltransferase 1 (302 aa).

Transmembrane regions (helical) follow at residues 30 to 50 (VVAL…PGAV), 52 to 72 (LQPL…AAAF), 102 to 122 (ALTF…TLVN), 124 to 144 (LTAW…TAYL), 152 to 172 (IVVG…SVTG), 178 to 198 (ALLL…ALAI), 224 to 244 (CILL…LVGM), 245 to 265 (CGPL…YKSW), and 282 to 302 (FSIY…YLWV).

Belongs to the UbiA prenyltransferase family. Protoheme IX farnesyltransferase subfamily.

The protein resides in the cell inner membrane. The catalysed reaction is heme b + (2E,6E)-farnesyl diphosphate + H2O = Fe(II)-heme o + diphosphate. Its pathway is porphyrin-containing compound metabolism; heme O biosynthesis; heme O from protoheme: step 1/1. In terms of biological role, converts heme B (protoheme IX) to heme O by substitution of the vinyl group on carbon 2 of heme B porphyrin ring with a hydroxyethyl farnesyl side group. This Shewanella woodyi (strain ATCC 51908 / MS32) protein is Protoheme IX farnesyltransferase 1.